Here is a 228-residue protein sequence, read N- to C-terminus: Cytochrome c oxidase subunit 2 (228 aa).

Residues 1–26 lie on the Mitochondrial intermembrane side of the membrane; sequence MSTWANLGLQDSASPLMEQLIFFHDH. Residues 27 to 48 traverse the membrane as a helical segment; it reads ALLILVMITVLVGYLMFMLFFN. The Mitochondrial matrix portion of the chain corresponds to 49–62; that stretch reads NYVNRFLLHGQLIE. Residues 63–82 form a helical membrane-spanning segment; the sequence is MIWTILPAIILLFIALPSLR. Residues 83-228 are Mitochondrial intermembrane-facing; the sequence is LLYLLDEINE…FIKWISSNNS (146 aa). Residues His-161, Cys-196, Glu-198, Cys-200, His-204, and Met-207 each coordinate Cu cation. Glu-198 is a binding site for Mg(2+).

It belongs to the cytochrome c oxidase subunit 2 family. In terms of assembly, component of the cytochrome c oxidase (complex IV, CIV), a multisubunit enzyme composed of a catalytic core of 3 subunits and several supernumerary subunits. The complex exists as a monomer or a dimer and forms supercomplexes (SCs) in the inner mitochondrial membrane with ubiquinol-cytochrome c oxidoreductase (cytochrome b-c1 complex, complex III, CIII). The cofactor is Cu cation.

The protein localises to the mitochondrion inner membrane. It carries out the reaction 4 Fe(II)-[cytochrome c] + O2 + 8 H(+)(in) = 4 Fe(III)-[cytochrome c] + 2 H2O + 4 H(+)(out). Functionally, component of the cytochrome c oxidase, the last enzyme in the mitochondrial electron transport chain which drives oxidative phosphorylation. The respiratory chain contains 3 multisubunit complexes succinate dehydrogenase (complex II, CII), ubiquinol-cytochrome c oxidoreductase (cytochrome b-c1 complex, complex III, CIII) and cytochrome c oxidase (complex IV, CIV), that cooperate to transfer electrons derived from NADH and succinate to molecular oxygen, creating an electrochemical gradient over the inner membrane that drives transmembrane transport and the ATP synthase. Cytochrome c oxidase is the component of the respiratory chain that catalyzes the reduction of oxygen to water. Electrons originating from reduced cytochrome c in the intermembrane space (IMS) are transferred via the dinuclear copper A center (CU(A)) of subunit 2 and heme A of subunit 1 to the active site in subunit 1, a binuclear center (BNC) formed by heme A3 and copper B (CU(B)). The BNC reduces molecular oxygen to 2 water molecules using 4 electrons from cytochrome c in the IMS and 4 protons from the mitochondrial matrix. This chain is Cytochrome c oxidase subunit 2 (mt:CoII), found in Drosophila melanogaster (Fruit fly).